Consider the following 208-residue polypeptide: dITP/XTP pyrophosphatase (208 aa).

7–12 (SNNAKK) provides a ligand contact to substrate. Mg(2+)-binding residues include Glu39 and Asp68. Asp68 (proton acceptor) is an active-site residue. Substrate contacts are provided by residues Ser69, 162-165 (FGYD), Lys185, and 190-191 (HR).

This sequence belongs to the HAM1 NTPase family. Homodimer. Requires Mg(2+) as cofactor.

It carries out the reaction XTP + H2O = XMP + diphosphate + H(+). The catalysed reaction is dITP + H2O = dIMP + diphosphate + H(+). It catalyses the reaction ITP + H2O = IMP + diphosphate + H(+). Its function is as follows. Pyrophosphatase that catalyzes the hydrolysis of nucleoside triphosphates to their monophosphate derivatives, with a high preference for the non-canonical purine nucleotides XTP (xanthosine triphosphate), dITP (deoxyinosine triphosphate) and ITP. Seems to function as a house-cleaning enzyme that removes non-canonical purine nucleotides from the nucleotide pool, thus preventing their incorporation into DNA/RNA and avoiding chromosomal lesions. The chain is dITP/XTP pyrophosphatase from Methylibium petroleiphilum (strain ATCC BAA-1232 / LMG 22953 / PM1).